The following is a 2009-amino-acid chain: ADP-ribosylation factor guanine nucleotide-exchange factor SEC7 (2009 aa).

Residues 1 to 220 (MSEQNSVVNA…ISLSSNGSNT (220 aa)) form a disordered region. The span at 17 to 33 (ISSNVETASSVNPSVKP) shows a compositional bias: polar residues. Positions 37–53 (IKEEAKETNGEDQKCKG) are enriched in basic and acidic residues. The segment covering 91 to 118 (EGEDGDEDEDEDEDEDEDNGDEDDEDVD) has biased composition (acidic residues). Low complexity predominate over residues 134 to 143 (SVSGESTESS). Over residues 144–154 (SGEDEESDESD) the composition is skewed to acidic residues. Over residues 155-165 (GNTSNSSSGDE) the composition is skewed to low complexity. A compositionally biased stretch (acidic residues) spans 166-184 (SGSEEEEEEEEEEEEEENA). The span at 194–209 (SVPTNDSTAPRSTHTR) shows a compositional bias: polar residues. Low complexity predominate over residues 210-220 (NISLSSNGSNT). Phosphoserine is present on residues Ser-212 and Ser-215. Thr-334 carries the post-translational modification Phosphothreonine. Phosphoserine occurs at positions 447, 452, and 455. Residues 653–657 (NYDCN) carry the HUS box motif. The segment covering 771 to 788 (SSARQESRSSLSNDVRSS) has biased composition (low complexity). Residues 771 to 814 (SSARQESRSSLSNDVRSSIMTSNDDFKPTYEDEESRSLSSQNID) are disordered. Residue Lys-797 forms a Glycyl lysine isopeptide (Lys-Gly) (interchain with G-Cter in ubiquitin) linkage. Position 807 is a phosphoserine (Ser-807). Positions 824-1010 (LKLRKTALSE…LFNEIANNEI (187 aa)) constitute an SEC7 domain. Asp-940 contacts Mg(2+). The HDS1 domain stretch occupies residues 1017 to 1220 (HQAMLSGDTN…QARVANPRVS (204 aa)). Ser-1226 bears the Phosphoserine mark. Thr-1240 bears the Phosphothreonine mark. Over residues 1708 to 1723 (GRKSSVSHHQTTNDTS) the composition is skewed to polar residues. A disordered region spans residues 1708–1803 (GRKSSVSHHQ…KKTKHMKRNE (96 aa)). Residues 1724 to 1751 (QHSDDDSNDRRENDSNISETVERAHQEE) are compositionally biased toward basic and acidic residues. 2 positions are modified to phosphoserine: Ser-1741 and Ser-1752. Over residues 1764 to 1777 (LNGQTKLNNGNSVP) the composition is skewed to polar residues. A C2 domain-interacting region (CIR) region spans residues 1836-1883 (FENEDFAHCIPYKEAIRITRLLEKSYEFSRDFNEDYGLRTRLVEARVV).

In terms of assembly, interacts with ARF1. Interacts (via C-terminus) with RSP5 ubiquitin ligase.

It is found in the cytoplasm. The protein resides in the golgi apparatus. The protein localises to the trans-Golgi network. Its subcellular location is the cytoplasmic vesicle. It localises to the COPI-coated vesicle membrane. It is found in the COPII-coated vesicle membrane. In terms of biological role, guanine exchange factor that acts as an activator of ARF1 at the trans-Golgi network and is thus involved in vesicular budding and traffic between compartments of the Golgi apparatus. Activation of Arf (ADP-ribosylation factor) GTPases is essential for vesicle formation via recruitment of cargo adapters and coat proteins necessary for Golgi trafficking. Also plays an essential role in ER-to-Golgi traffic. SEC7 also acts as an effector of two Rab GTPases, YPT1 and YPT31/32. The sequence is that of ADP-ribosylation factor guanine nucleotide-exchange factor SEC7 from Saccharomyces cerevisiae (strain ATCC 204508 / S288c) (Baker's yeast).